The sequence spans 269 residues: MGKKDKRWVMQRKNDFYYKLAKQNHYRSRASYKLLQLNEKFEIIYEGDNVVDLGCAPGGWLQASYDLVGEDGFVIGVDLQKVKPLREENIVAIQGDMTKKETINKIIDLMPSKADVVICDASPNISGVWEVDHSRSIELSLMALIATTHLLRKNGNFVVKVFQGSLFDQYVQLLTKYFKKVQTTKPKASRSVSAEVYVIGKKFLGKKFDKNTDFPIIKLIEDNEFLDRYIEETHEKKEGNETSDNDEDNNKNGLMIKKIKELRGKRSKL.

S-adenosyl-L-methionine-binding residues include Gly-58, Trp-60, Asp-78, Asp-96, and Asp-120. Residue Lys-160 is the Proton acceptor of the active site. Positions 234 to 269 (HEKKEGNETSDNDEDNNKNGLMIKKIKELRGKRSKL) are disordered. A compositionally biased stretch (basic and acidic residues) spans 258 to 269 (KIKELRGKRSKL).

This sequence belongs to the class I-like SAM-binding methyltransferase superfamily. RNA methyltransferase RlmE family.

It is found in the cytoplasm. It carries out the reaction uridine(2552) in 23S rRNA + S-adenosyl-L-methionine = 2'-O-methyluridine(2552) in 23S rRNA + S-adenosyl-L-homocysteine + H(+). In terms of biological role, specifically methylates the uridine in position 2552 of 23S rRNA at the 2'-O position of the ribose in the fully assembled 50S ribosomal subunit. The sequence is that of Ribosomal RNA large subunit methyltransferase E from Methanococcus aeolicus (strain ATCC BAA-1280 / DSM 17508 / OCM 812 / Nankai-3).